The primary structure comprises 101 residues: uncharacterized protein (101 aa).

The protein localises to the mitochondrion. This is an uncharacterized protein from Arabidopsis thaliana (Mouse-ear cress).